A 364-amino-acid polypeptide reads, in one-letter code: Probable protein disulfide-isomerase A6 (364 aa).

Residues 1–28 (MKMEMHQIWSRIALASFAFAILFVSVSA) form the signal peptide. 2 Thioredoxin domains span residues 29 to 137 (DDVV…TEGG) and 139 to 256 (NVKI…EKSG). Residues cysteine 58, cysteine 61, cysteine 177, and cysteine 180 each act as nucleophile in the active site. 2 cysteine pairs are disulfide-bonded: cysteine 58–cysteine 61 and cysteine 177–cysteine 180.

The protein belongs to the protein disulfide isomerase family.

The protein localises to the endoplasmic reticulum lumen. The catalysed reaction is Catalyzes the rearrangement of -S-S- bonds in proteins.. In Medicago sativa (Alfalfa), this protein is Probable protein disulfide-isomerase A6.